A 361-amino-acid chain; its full sequence is Peptide chain release factor 1 (361 aa).

Residue glutamine 235 is modified to N5-methylglutamine.

The protein belongs to the prokaryotic/mitochondrial release factor family. Post-translationally, methylated by PrmC. Methylation increases the termination efficiency of RF1.

It is found in the cytoplasm. Peptide chain release factor 1 directs the termination of translation in response to the peptide chain termination codons UAG and UAA. The protein is Peptide chain release factor 1 of Buchnera aphidicola subsp. Schizaphis graminum (strain Sg).